The primary structure comprises 515 residues: Cytidine and dCMP deaminase domain-containing protein 1 (515 aa).

Composition is skewed to polar residues over residues 1–11 (MKEAGQMQNLE) and 18–27 (SVSTQTGSMT). Disordered regions lie at residues 1–27 (MKEA…GSMT) and 56–83 (RQKS…STDK). Basic and acidic residues predominate over residues 60-83 (QKNEEGKHGPLGDNEEMTRVSTDK). A CMP/dCMP-type deaminase 1 domain is found at 71-169 (GDNEEMTRVS…SLLTEASSSE (99 aa)). Histidine 110, cysteine 135, and cysteine 138 together coordinate Zn(2+). Residues 272–284 (NLRQNMKDLILLL) carry the Nuclear export signal motif. A CMP/dCMP-type deaminase 2 domain is found at 318 to 483 (EIARHCMVQA…LNPSGAYGLE (166 aa)). Histidine 399 serves as a coordination point for Zn(2+). Glutamate 401 serves as the catalytic Proton donor. The Zn(2+) site is built by cysteine 427 and cysteine 430. The Bipartite nuclear localization signal signature appears at 489 to 511 (RRENGVLRPVPQKEEQHQDKKLC). A disordered region spans residues 494 to 515 (VLRPVPQKEEQHQDKKLCLGIH).

The protein belongs to the cytidine and deoxycytidylate deaminase family. It depends on Zn(2+) as a cofactor.

It localises to the cytoplasm. The protein localises to the nucleus. It carries out the reaction 2'-deoxycytidine + H2O + H(+) = 2'-deoxyuridine + NH4(+). The enzyme catalyses cytidine + H2O + H(+) = uridine + NH4(+). Catalyzes the deamination of cytidine and deoxycytidine into uridine and deoxyuridine, respectively. May play an important role in testicular development and spermatogenesis. This is Cytidine and dCMP deaminase domain-containing protein 1 (CDADC1) from Pongo abelii (Sumatran orangutan).